The sequence spans 160 residues: Cyanate hydratase (160 aa).

Active-site residues include arginine 100, glutamate 103, and serine 126.

The protein belongs to the cyanase family.

It catalyses the reaction cyanate + hydrogencarbonate + 3 H(+) = NH4(+) + 2 CO2. Its function is as follows. Catalyzes the reaction of cyanate with bicarbonate to produce ammonia and carbon dioxide. The sequence is that of Cyanate hydratase from Penicillium rubens (strain ATCC 28089 / DSM 1075 / NRRL 1951 / Wisconsin 54-1255) (Penicillium chrysogenum).